The chain runs to 930 residues: MLKLLLGDPNARKLKKYQPYITEINLLEEDIKVLSDEDLKGKTAEFKQRLAKGETLDDILPEAFAVVREAGRRVLGLRHFDVQMLGGVILHSGQIAEMKTGEGKTLVATLPSYLNALTGKGVHVITVNDYLARRDAEWMGQVHRFLGLSVGLIQSSMTPSERQKNYECDITYVTNSEVGFDYLRDNMATSMADVVQRPFNYCVIDEVDSILVDEARTPLIISGQVERPTEKYVQAAEIALTLQKDEHYDVDEKARNVLLTDEGFAQAEELLGVTDLFDPEDPWAHFVFNAIKAKELFLKDVNYIVRNGEVVIVDEFTGRVLPGRRWSDGLHQAIEAKEHVDIQPETQTLATITYQNLFLLYPKLGGMTGTAKTEEAEFERIYKLEVTIIPTNRIRRREDLSDLVFKKEIGKWQAIARECAEMHELGRPVLVGTTSVEKSEYLSQLLREQGIPHELLNARPENVEREAEIVAQAGRRGAVTIATNMAGRGTDIILGGNSEYMARLKLREYFMPRIVRPDDEDVFGVQRAAGLPTGHGAGQGFVPGKKVKTWKASPEIFPTQLSKEAEQLLKEAVDFAVREYGDRSLPELEAEDKVAVAAEKAPTDDSVIQKLRDAYNRIKHEYEEFTSTEHDEVVGRGGLHVIGTERHESRRIDNQLRGRAGRQGDPGSTRFFLSLEDNLLRIFGGDRVAGLMEAFNVEDDMPIESGMLTRSLEGAQRKVETYYYDIRKQVFEYDEVMNNQRRAIYAERRRVLEGQDLKEQVIKYAEKTMDEIVDYYINVDLPSEEWELDKLVDKVKEFVYLLSDMQANQLEDMGVSEIKAFLHEQVRIAYDLKEAQIDQIQPGLMRQAERFFILQRIDTLWREHLQQMDALRESVGLRGYGQKDPLIEYKSEGYELFLDMMVNIRRDVVYSLFMFQPQPQPVVQTSSEMV.

Residues Q83, 101–105 (GEGKT), and D491 contribute to the ATP site.

It belongs to the SecA family. Monomer and homodimer. Part of the essential Sec protein translocation apparatus which comprises SecA, SecYEG and auxiliary proteins SecDF. Other proteins may also be involved.

The protein localises to the cell inner membrane. Its subcellular location is the cellular thylakoid membrane. The protein resides in the cytoplasm. The catalysed reaction is ATP + H2O + cellular proteinSide 1 = ADP + phosphate + cellular proteinSide 2.. Functionally, part of the Sec protein translocase complex. Interacts with the SecYEG preprotein conducting channel. Has a central role in coupling the hydrolysis of ATP to the transfer of proteins into and across the cell membrane, serving as an ATP-driven molecular motor driving the stepwise translocation of polypeptide chains across the membrane. Its function is as follows. Probably participates in protein translocation into and across both the cytoplasmic and thylakoid membranes in cyanobacterial cells. This Nostoc sp. (strain PCC 7120 / SAG 25.82 / UTEX 2576) protein is Protein translocase subunit SecA.